A 41-amino-acid polypeptide reads, in one-letter code: Photosystem I reaction center subunit IX (41 aa).

A helical transmembrane segment spans residues 7-27; that stretch reads YLSTAPVLATLWFGLLAGILI.

This sequence belongs to the PsaJ family.

It localises to the plastid. The protein localises to the chloroplast thylakoid membrane. Functionally, may help in the organization of the PsaE and PsaF subunits. This Chara vulgaris (Common stonewort) protein is Photosystem I reaction center subunit IX.